The primary structure comprises 117 residues: uncharacterized protein (117 aa).

Belongs to the mimivirus R69 family.

This is an uncharacterized protein from Acanthamoeba polyphaga mimivirus (APMV).